Here is a 366-residue protein sequence, read N- to C-terminus: Transaldolase (366 aa).

Lys-140 functions as the Schiff-base intermediate with substrate in the catalytic mechanism.

Belongs to the transaldolase family. Type 2 subfamily.

It localises to the cytoplasm. The enzyme catalyses D-sedoheptulose 7-phosphate + D-glyceraldehyde 3-phosphate = D-erythrose 4-phosphate + beta-D-fructose 6-phosphate. The protein operates within carbohydrate degradation; pentose phosphate pathway; D-glyceraldehyde 3-phosphate and beta-D-fructose 6-phosphate from D-ribose 5-phosphate and D-xylulose 5-phosphate (non-oxidative stage): step 2/3. In terms of biological role, transaldolase is important for the balance of metabolites in the pentose-phosphate pathway. This Saccharopolyspora erythraea (strain ATCC 11635 / DSM 40517 / JCM 4748 / NBRC 13426 / NCIMB 8594 / NRRL 2338) protein is Transaldolase.